Consider the following 623-residue polypeptide: Chaperone protein HtpG (623 aa).

Residues 1–336 (MVSKQQTMGF…ASDLPLNISR (336 aa)) form an a; substrate-binding region. A b region spans residues 337-550 (EILQDNKQVE…EQDMGLEMQR (214 aa)). The tract at residues 551–623 (ILQAAGQQIP…NRVNRLLVSS (73 aa)) is c.

Belongs to the heat shock protein 90 family. In terms of assembly, homodimer.

The protein localises to the cytoplasm. Its function is as follows. Molecular chaperone. Has ATPase activity. This chain is Chaperone protein HtpG, found in Legionella pneumophila (strain Lens).